An 85-amino-acid chain; its full sequence is Small muscular protein (85 aa).

Residues 19–63 (PMGAFRPGAGQPPRRKESTPGTAEGAPATPEEKKPVPGMKKFPGP) are disordered. Ser-36 carries the post-translational modification Phosphoserine. A Phosphothreonine modification is found at Thr-47.

It belongs to the SMPX family.

Its function is as follows. Plays a role in the regulatory network through which muscle cells coordinate their structural and functional states during growth, adaptation, and repair. The protein is Small muscular protein (Smpx) of Rattus norvegicus (Rat).